The chain runs to 68 residues: Conotoxin TsMMSK-021 (68 aa).

The N-terminal stretch at 1–20 (MMSKLGVLLTICLLLFPLTA) is a signal peptide. A propeptide spanning residues 21–52 (VRLDGDQHTDRPADRMQDIATEQHPLFDPVKR) is cleaved from the precursor. 3 disulfide bridges follow: Cys-53–Cys-66, Cys-54–Cys-62, and Cys-58–Cys-65. Pro-64 bears the 4-hydroxyproline mark.

The protein belongs to the conotoxin M superfamily. In terms of tissue distribution, expressed by the venom duct.

The protein localises to the secreted. In Conus tessulatus (Tessellate cone), this protein is Conotoxin TsMMSK-021.